The following is a 132-amino-acid chain: D-ribose pyranase (132 aa).

His-20 serves as the catalytic Proton donor. Substrate contacts are provided by residues Asp-28, His-99, and 121–123 (YSN).

The protein belongs to the RbsD / FucU family. RbsD subfamily. As to quaternary structure, homodecamer.

It localises to the cytoplasm. The catalysed reaction is beta-D-ribopyranose = beta-D-ribofuranose. It participates in carbohydrate metabolism; D-ribose degradation; D-ribose 5-phosphate from beta-D-ribopyranose: step 1/2. Its function is as follows. Catalyzes the interconversion of beta-pyran and beta-furan forms of D-ribose. The chain is D-ribose pyranase from Pseudomonas putida (strain GB-1).